We begin with the raw amino-acid sequence, 293 residues long: Polyamine aminopropyltransferase (293 aa).

The 235-residue stretch at 10 to 244 folds into the PABS domain; it reads HIWFTEYHNN…GFWSFTLASK (235 aa). Residue Gln-39 participates in S-methyl-5'-thioadenosine binding. Spermidine-binding residues include His-70 and Asp-94. Residues Glu-114 and 145 to 146 contribute to the S-methyl-5'-thioadenosine site; that span reads DG. Asp-163 functions as the Proton acceptor in the catalytic mechanism. 163–166 contributes to the spermidine binding site; that stretch reads DCPD. Pro-170 is an S-methyl-5'-thioadenosine binding site.

This sequence belongs to the spermidine/spermine synthase family. Homodimer or homotetramer.

It is found in the cytoplasm. The enzyme catalyses S-adenosyl 3-(methylsulfanyl)propylamine + putrescine = S-methyl-5'-thioadenosine + spermidine + H(+). Its pathway is amine and polyamine biosynthesis; spermidine biosynthesis; spermidine from putrescine: step 1/1. Functionally, catalyzes the irreversible transfer of a propylamine group from the amino donor S-adenosylmethioninamine (decarboxy-AdoMet) to putrescine (1,4-diaminobutane) to yield spermidine. This chain is Polyamine aminopropyltransferase, found in Methanocaldococcus jannaschii (strain ATCC 43067 / DSM 2661 / JAL-1 / JCM 10045 / NBRC 100440) (Methanococcus jannaschii).